A 543-amino-acid polypeptide reads, in one-letter code: Hydroxylamine reductase (543 aa).

Positions 5, 8, 17, and 23 each coordinate [4Fe-4S] cluster. Hybrid [4Fe-2O-2S] cluster-binding residues include histidine 250, glutamate 274, cysteine 318, cysteine 410, cysteine 438, cysteine 463, glutamate 498, and lysine 500. Cysteine 410 carries the post-translational modification Cysteine persulfide.

Belongs to the HCP family. Requires [4Fe-4S] cluster as cofactor. Hybrid [4Fe-2O-2S] cluster serves as cofactor.

Its subcellular location is the cytoplasm. The catalysed reaction is A + NH4(+) + H2O = hydroxylamine + AH2 + H(+). In terms of biological role, catalyzes the reduction of hydroxylamine to form NH(3) and H(2)O. The sequence is that of Hydroxylamine reductase from Petrotoga mobilis (strain DSM 10674 / SJ95).